The following is a 359-amino-acid chain: Dihydroorotate dehydrogenase (quinone) (359 aa).

FMN-binding positions include 68–72 (AGFDK) and alanine 92. Lysine 72 contributes to the substrate binding site. 117–121 (NAYGF) contributes to the substrate binding site. FMN contacts are provided by asparagine 146 and asparagine 179. Asparagine 179 serves as a coordination point for substrate. The Nucleophile role is filled by serine 182. Asparagine 184 contacts substrate. Residues lysine 215 and threonine 243 each coordinate FMN. 244–245 (NT) contributes to the substrate binding site. FMN contacts are provided by residues glycine 263, glycine 292, and 313–314 (YT).

This sequence belongs to the dihydroorotate dehydrogenase family. Type 2 subfamily. As to quaternary structure, monomer. FMN serves as cofactor.

The protein localises to the cell membrane. It carries out the reaction (S)-dihydroorotate + a quinone = orotate + a quinol. The protein operates within pyrimidine metabolism; UMP biosynthesis via de novo pathway; orotate from (S)-dihydroorotate (quinone route): step 1/1. In terms of biological role, catalyzes the conversion of dihydroorotate to orotate with quinone as electron acceptor. In Nautilia profundicola (strain ATCC BAA-1463 / DSM 18972 / AmH), this protein is Dihydroorotate dehydrogenase (quinone).